Here is a 280-residue protein sequence, read N- to C-terminus: UPF0750 membrane protein YitT (280 aa).

Transmembrane regions (helical) follow at residues 9–29 (LLIV…FLIP), 54–74 (FYIS…ILGW), 80–100 (SFTV…GILP), and 151–171 (VGTY…LLQG).

The protein belongs to the UPF0750 family.

It is found in the cell membrane. The sequence is that of UPF0750 membrane protein YitT (yitT) from Bacillus subtilis (strain 168).